Here is a 191-residue protein sequence, read N- to C-terminus: MNKEAYIQMFKDTDALLEGHFLLSSGKHSAKYLQCAKVLQYPNLAEMICRDLAEYFKDQQIDVVIGPALGAVTLSYELARQLNCRSIFAEREDGIMKLRRGFKIEEGEKVLVVEDVITTGGSVKEIIEIVKEYKGEIVAVAGIVDRSGGKVGLGYPLKTLLTLNIETYEPDECPLCGEGIPIVKPGSRKVK.

114-122 (EDVITTGGS) is a 5-phospho-alpha-D-ribose 1-diphosphate binding site. Residues threonine 118 and arginine 146 each contribute to the orotate site.

The protein belongs to the purine/pyrimidine phosphoribosyltransferase family. PyrE subfamily. As to quaternary structure, homodimer. It depends on Mg(2+) as a cofactor.

The catalysed reaction is orotidine 5'-phosphate + diphosphate = orotate + 5-phospho-alpha-D-ribose 1-diphosphate. It functions in the pathway pyrimidine metabolism; UMP biosynthesis via de novo pathway; UMP from orotate: step 1/2. In terms of biological role, catalyzes the transfer of a ribosyl phosphate group from 5-phosphoribose 1-diphosphate to orotate, leading to the formation of orotidine monophosphate (OMP). In Caldicellulosiruptor saccharolyticus (strain ATCC 43494 / DSM 8903 / Tp8T 6331), this protein is Orotate phosphoribosyltransferase.